The sequence spans 114 residues: T cell receptor beta variable 27 (114 aa).

Positions 1–21 (MGPQLLGYVVLCLLGAGPLEA) are cleaved as a signal peptide. The 93-residue stretch at 22–114 (QVTQNPRYLI…TSLYFCASSL (93 aa)) folds into the Ig-like domain. Cys42 and Cys110 are oxidised to a cystine. Residue Asn103 is glycosylated (N-linked (GlcNAc...) asparagine).

In terms of assembly, alpha-beta TR is a heterodimer composed of an alpha and beta chain; disulfide-linked. The alpha-beta TR is associated with the transmembrane signaling CD3 coreceptor proteins to form the TR-CD3 (TcR or TCR). The assembly of alpha-beta TR heterodimers with CD3 occurs in the endoplasmic reticulum where a single alpha-beta TR heterodimer associates with one CD3D-CD3E heterodimer, one CD3G-CD3E heterodimer and one CD247 homodimer forming a stable octameric structure. CD3D-CD3E and CD3G-CD3E heterodimers preferentially associate with TR alpha and TR beta chains, respectively. The association of the CD247 homodimer is the last step of TcR assembly in the endoplasmic reticulum and is required for transport to the cell surface.

The protein resides in the cell membrane. Its function is as follows. V region of the variable domain of T cell receptor (TR) beta chain that participates in the antigen recognition. Alpha-beta T cell receptors are antigen specific receptors which are essential to the immune response and are present on the cell surface of T lymphocytes. Recognize peptide-major histocompatibility (MH) (pMH) complexes that are displayed by antigen presenting cells (APC), a prerequisite for efficient T cell adaptive immunity against pathogens. Binding of alpha-beta TR to pMH complex initiates TR-CD3 clustering on the cell surface and intracellular activation of LCK that phosphorylates the ITAM motifs of CD3G, CD3D, CD3E and CD247 enabling the recruitment of ZAP70. In turn ZAP70 phosphorylates LAT, which recruits numerous signaling molecules to form the LAT signalosome. The LAT signalosome propagates signal branching to three major signaling pathways, the calcium, the mitogen-activated protein kinase (MAPK) kinase and the nuclear factor NF-kappa-B (NF-kB) pathways, leading to the mobilization of transcription factors that are critical for gene expression and essential for T cell growth and differentiation. The T cell repertoire is generated in the thymus, by V-(D)-J rearrangement. This repertoire is then shaped by intrathymic selection events to generate a peripheral T cell pool of self-MH restricted, non-autoaggressive T cells. Post-thymic interaction of alpha-beta TR with the pMH complexes shapes TR structural and functional avidity. In Homo sapiens (Human), this protein is T cell receptor beta variable 27.